The chain runs to 282 residues: MIVNCIDIANNILDKFKSDLEKLKKKKIIPHMAIVKINDDAASDKYVSIKLKKAAELGVKTTLISEGIKTQDDLIKQIHILNNDDSIDGYIIQLPLPKGFDSNVICEHIDVNKDIDGLSSFAISRNLANSNLFHPKPCTANGIIEILKQSNYSIEGKHAVIINRSMIVGKPLIGLFLENNATVTVCHTKTQNLKEMTKTADIVVVAIGKPDFLTKDMVNPNAFVIDAGISVVDGKVVGDAAKDLQEYVKYITPVPNGVGRLTVAMIFKNLMDLVKEKYNERI.

NADP(+) is bound by residues 163-165 (NRS), Thr-188, and Ile-229.

The protein belongs to the tetrahydrofolate dehydrogenase/cyclohydrolase family. Homodimer.

It carries out the reaction (6R)-5,10-methylene-5,6,7,8-tetrahydrofolate + NADP(+) = (6R)-5,10-methenyltetrahydrofolate + NADPH. It catalyses the reaction (6R)-5,10-methenyltetrahydrofolate + H2O = (6R)-10-formyltetrahydrofolate + H(+). It participates in one-carbon metabolism; tetrahydrofolate interconversion. In terms of biological role, catalyzes the oxidation of 5,10-methylenetetrahydrofolate to 5,10-methenyltetrahydrofolate and then the hydrolysis of 5,10-methenyltetrahydrofolate to 10-formyltetrahydrofolate. In Malacoplasma penetrans (strain HF-2) (Mycoplasma penetrans), this protein is Bifunctional protein FolD.